The following is a 178-amino-acid chain: Caveolin-1 (178 aa).

N-acetylserine is present on Ser-2. Ser-2 carries the phosphoserine modification. The interval 2 to 94 (SGGKYIDSEG…WKASFTTFTV (93 aa)) is required for homooligomerization. Residues 2-104 (SGGKYIDSEG…TKYWFYRLLS (103 aa)) lie on the Cytoplasmic side of the membrane. An N6-acetyllysine; alternate modification is found at Lys-5. A Glycyl lysine isopeptide (Lys-Gly) (interchain with G-Cter in ubiquitin); alternate cross-link involves residue Lys-5. Tyr-6 carries the post-translational modification Phosphotyrosine. Ser-9 carries the phosphoserine modification. A Phosphotyrosine; by ABL1 modification is found at Tyr-14. A Phosphotyrosine modification is found at Tyr-25. Glycyl lysine isopeptide (Lys-Gly) (interchain with G-Cter in ubiquitin) cross-links involve residues Lys-26, Lys-30, Lys-39, Lys-47, and Lys-57. The interaction with CAVIN3 stretch occupies residues 82 to 94 (DGIWKASFTTFTV). Residues 105 to 125 (ALFGIPMALIWGIYFAILSFL) constitute an intramembrane region (helical). Residues 126-178 (HIWAVVPCIRSYLIEIQCISRIYSICIHTFCDPLFEAIGKIFSNVRIALQKEI) lie on the Cytoplasmic side of the membrane. The interval 131-142 (VPCIRSYLIEIQ) is interacts with SPRY1, SPRY2, SPRY3 and SPRY4. 3 S-palmitoyl cysteine lipidation sites follow: Cys-133, Cys-143, and Cys-156. Residues 149 to 160 (SICIHTFCDPLF) are interacts with SPRY1, SPRY2, and SPRY4. The interacts with SPRY1, SPRY2, SPRY3 and SPRY4 stretch occupies residues 167 to 178 (FSNVRIALQKEI).

It belongs to the caveolin family. Homooligomer. Interacts with GLIPR2. Interacts with NOSTRIN. Interacts with SNAP25 and STX1A. Interacts (via the N-terminus) with DPP4; the interaction is direct. Interacts with CTNNB1, CDH1 and JUP. Interacts with PACSIN2; this interaction induces membrane tubulation. Interacts with SLC7A9. Interacts with BMX and BTK. Interacts with TGFBR1. Interacts with CAVIN3 (via leucine-zipper domain) in a cholesterol-sensitive manner. Interacts with CAVIN1. Interacts with EHD2 in a cholesterol-dependent manner. Forms a ternary complex with UBXN6 and VCP; mediates CAV1 targeting to lysosomes for degradation. Interacts with ABCG1; this interaction regulates ABCG1-mediated cholesterol efflux. Interacts with NEU3; this interaction enhances NEU3 sialidase activity within caveola. Interacts (via C-terminus) with SPRY1, SPRY2 (via C-terminus), SPRY3, and SPRY4. Interacts with IGFBP5; this interaction allows trafficking of IGFBP5 from the plasma membrane to the nucleus. Post-translationally, phosphorylated at Tyr-14 by ABL1 in response to oxidative stress. In terms of processing, ubiquitinated. Undergo monoubiquitination and multi- and/or polyubiquitination. Monoubiquitination of N-terminal lysines promotes integration in a ternary complex with UBXN6 and VCP which promotes oligomeric CAV1 targeting to lysosomes for degradation. Ubiquitinated by ZNRF1; leading to degradation and modulation of the TLR4-mediated immune response.

The protein localises to the golgi apparatus membrane. The protein resides in the cell membrane. It localises to the membrane. It is found in the caveola. Its subcellular location is the membrane raft. May act as a scaffolding protein within caveolar membranes. Forms a stable heterooligomeric complex with CAV2 that targets to lipid rafts and drives caveolae formation. Mediates the recruitment of CAVIN proteins (CAVIN1/2/3/4) to the caveolae. Interacts directly with G-protein alpha subunits and can functionally regulate their activity. Involved in the costimulatory signal essential for T-cell receptor (TCR)-mediated T-cell activation. Its binding to DPP4 induces T-cell proliferation and NF-kappa-B activation in a T-cell receptor/CD3-dependent manner. Recruits CTNNB1 to caveolar membranes and may regulate CTNNB1-mediated signaling through the Wnt pathway. Negatively regulates TGFB1-mediated activation of SMAD2/3 by mediating the internalization of TGFBR1 from membrane rafts leading to its subsequent degradation. Binds 20(S)-hydroxycholesterol (20(S)-OHC). In Didelphis virginiana (North American opossum), this protein is Caveolin-1 (CAV1).